A 355-amino-acid polypeptide reads, in one-letter code: Probable nitronate monooxygenase (355 aa).

Residues Asn-71, Gln-175, Gly-180, Gly-218, and 237–240 each bind FMN; that span reads QMGT.

This sequence belongs to the nitronate monooxygenase family. NMO class I subfamily. It depends on FMN as a cofactor.

The enzyme catalyses 3 propionate 3-nitronate + 3 O2 + H2O = 3 3-oxopropanoate + 2 nitrate + nitrite + H2O2 + 3 H(+). Functionally, nitronate monooxygenase that uses molecular oxygen to catalyze the oxidative denitrification of alkyl nitronates. Acts on propionate 3-nitronate (P3N), the presumed physiological substrate. Probably functions in the detoxification of P3N, a metabolic poison produced by plants and fungi as a defense mechanism. The chain is Probable nitronate monooxygenase from Staphylococcus aureus (strain MSSA476).